The following is a 418-amino-acid chain: Secreted beta-glucosidase SUN41 (418 aa).

An N-terminal signal peptide occupies residues Met1–Ala23. Residues Ser81–Ile97 show a composition bias toward low complexity. The disordered stretch occupies residues Ser81–Asp150. The N-linked (GlcNAc...) asparagine glycan is linked to Asn100. The segment covering Ser112–Glu126 has biased composition (polar residues). Residues Ser127 to Thr136 show a composition bias toward low complexity.

The protein belongs to the SUN family. Post-translationally, predicted to be a substrate for cleavage by KEX2.

It localises to the secreted. The protein localises to the cell wall. Functionally, cell surface beta-glucosidase involved in cytokinesis, cell wall biogenesis, adhesion to host tissue, and biofilm formation; thus playing an important role in the host-pathogen interaction. Has hydrolytic activity on linear (1-&gt;3)-beta-D-glucans such as laminaribiose and other laminarioligosaccharides. This is Secreted beta-glucosidase SUN41 from Candida albicans (strain SC5314 / ATCC MYA-2876) (Yeast).